A 111-amino-acid polypeptide reads, in one-letter code: Secreted transmembrane peptide 5 (111 aa).

The first 46 residues, 1–46 (MRLSVFYIFITRLAMTKNATKNEMGSKSPNIVALVLPLLLILYTLS), serve as a signal peptide directing secretion. The short motif at 66–79 (IVWTPHSNSCGGSP) is the SCOOP motif element. The SxS motif essential for MIK2 binding signature appears at 72–74 (SNS). Positions 89-111 (TTGRPCRRSRPPGTNIPVSDQSP) are disordered.

This sequence belongs to the serine rich endogenous peptide (SCOOP) phytocytokine family. In terms of assembly, interacts with MIK2 (via extracellular leucine-rich repeat domain); this interaction triggers the formation of complex between MIK2 and the BAK1/SERK3 and SERK4 coreceptors, and subsequent BAK1 activation by phosphorylation. As to expression, mostly expressed in leaves, and, to a lower extent, in roots, stems, siliques, seeds and flowers.

It localises to the cell membrane. Its subcellular location is the secreted. It is found in the extracellular space. The protein resides in the apoplast. In terms of biological role, brassicaceae-specific phytocytokine (plant endogenous peptide released into the apoplast) perceived by MIK2 in a BAK1/SERK3 and SERK4 coreceptors-dependent manner, that modulates various physiological and antimicrobial processes including growth prevention and reactive oxygen species (ROS) response regulation. The chain is Secreted transmembrane peptide 5 from Arabidopsis thaliana (Mouse-ear cress).